Reading from the N-terminus, the 788-residue chain is Endonuclease MutS2 (788 aa).

332-339 (GPNTGGKT) serves as a coordination point for ATP. Residues 713-788 (IDLRGLDSEE…GTGVTVVELK (76 aa)) enclose the Smr domain.

This sequence belongs to the DNA mismatch repair MutS family. MutS2 subfamily. As to quaternary structure, homodimer. Binds to stalled ribosomes, contacting rRNA.

Functionally, endonuclease that is involved in the suppression of homologous recombination and thus may have a key role in the control of bacterial genetic diversity. In terms of biological role, acts as a ribosome collision sensor, splitting the ribosome into its 2 subunits. Detects stalled/collided 70S ribosomes which it binds and splits by an ATP-hydrolysis driven conformational change. Acts upstream of the ribosome quality control system (RQC), a ribosome-associated complex that mediates the extraction of incompletely synthesized nascent chains from stalled ribosomes and their subsequent degradation. Probably generates substrates for RQC. This Clostridium acetobutylicum (strain ATCC 824 / DSM 792 / JCM 1419 / IAM 19013 / LMG 5710 / NBRC 13948 / NRRL B-527 / VKM B-1787 / 2291 / W) protein is Endonuclease MutS2.